The primary structure comprises 173 residues: Peptide deformylase (173 aa).

Cys-91 and His-133 together coordinate Fe cation. The active site involves Glu-134. Residue His-137 coordinates Fe cation.

This sequence belongs to the polypeptide deformylase family. Fe(2+) serves as cofactor.

The catalysed reaction is N-terminal N-formyl-L-methionyl-[peptide] + H2O = N-terminal L-methionyl-[peptide] + formate. Removes the formyl group from the N-terminal Met of newly synthesized proteins. Requires at least a dipeptide for an efficient rate of reaction. N-terminal L-methionine is a prerequisite for activity but the enzyme has broad specificity at other positions. This chain is Peptide deformylase, found in Buchnera aphidicola subsp. Acyrthosiphon pisum (strain 5A).